We begin with the raw amino-acid sequence, 180 residues long: Large ribosomal subunit protein uL5 (180 aa).

This sequence belongs to the universal ribosomal protein uL5 family. As to quaternary structure, part of the 50S ribosomal subunit; part of the 5S rRNA/L5/L18/L25 subcomplex. Contacts the 5S rRNA and the P site tRNA. Forms a bridge to the 30S subunit in the 70S ribosome.

Functionally, this is one of the proteins that bind and probably mediate the attachment of the 5S RNA into the large ribosomal subunit, where it forms part of the central protuberance. In the 70S ribosome it contacts protein S13 of the 30S subunit (bridge B1b), connecting the 2 subunits; this bridge is implicated in subunit movement. Contacts the P site tRNA; the 5S rRNA and some of its associated proteins might help stabilize positioning of ribosome-bound tRNAs. This is Large ribosomal subunit protein uL5 from Mycoplasma mycoides subsp. mycoides SC (strain CCUG 32753 / NCTC 10114 / PG1).